The following is a 466-amino-acid chain: 23S rRNA (uracil(1939)-C(5))-methyltransferase RlmD (466 aa).

The 59-residue stretch at 11 to 69 (KITDTKHKEIVINRLDHLGAGIGHLNNKSIFVDGLLPGEKALVQITDDKKQYARAKVIK) folds into the TRAM domain. Cys-82, Cys-88, Cys-91, and Cys-184 together coordinate [4Fe-4S] cluster. S-adenosyl-L-methionine is bound by residues Gln-287, Phe-316, Asn-321, Glu-337, Asn-364, and Asp-385. Cys-411 acts as the Nucleophile in catalysis.

Belongs to the class I-like SAM-binding methyltransferase superfamily. RNA M5U methyltransferase family. RlmD subfamily.

The catalysed reaction is uridine(1939) in 23S rRNA + S-adenosyl-L-methionine = 5-methyluridine(1939) in 23S rRNA + S-adenosyl-L-homocysteine + H(+). In terms of biological role, catalyzes the formation of 5-methyl-uridine at position 1939 (m5U1939) in 23S rRNA. This Photobacterium profundum (strain SS9) protein is 23S rRNA (uracil(1939)-C(5))-methyltransferase RlmD.